A 295-amino-acid chain; its full sequence is 4-hydroxy-tetrahydrodipicolinate synthase (295 aa).

Thr-47 provides a ligand contact to pyruvate. The Proton donor/acceptor role is filled by Tyr-135. Lys-163 acts as the Schiff-base intermediate with substrate in catalysis. Ile-206 serves as a coordination point for pyruvate.

Belongs to the DapA family. In terms of assembly, homodimer.

It is found in the cytoplasm. The enzyme catalyses L-aspartate 4-semialdehyde + pyruvate = (2S,4S)-4-hydroxy-2,3,4,5-tetrahydrodipicolinate + H2O + H(+). It functions in the pathway amino-acid biosynthesis; L-lysine biosynthesis via DAP pathway; (S)-tetrahydrodipicolinate from L-aspartate: step 3/4. In terms of biological role, catalyzes the condensation of (S)-aspartate-beta-semialdehyde [(S)-ASA] and pyruvate to 4-hydroxy-tetrahydrodipicolinate (HTPA). The sequence is that of 4-hydroxy-tetrahydrodipicolinate synthase from Staphylococcus aureus (strain bovine RF122 / ET3-1).